Reading from the N-terminus, the 200-residue chain is Small ribosomal subunit protein uS4 (200 aa).

The S4 RNA-binding domain maps to 106 to 170 (RRLQTIVFKK…SPIANELHPI (65 aa)). The interval 178–200 (AERVKEEAEKEAAASEDGGEQDE) is disordered. Positions 179–190 (ERVKEEAEKEAA) are enriched in basic and acidic residues.

The protein belongs to the universal ribosomal protein uS4 family. Part of the 30S ribosomal subunit. Contacts protein S5. The interaction surface between S4 and S5 is involved in control of translational fidelity.

One of the primary rRNA binding proteins, it binds directly to 16S rRNA where it nucleates assembly of the body of the 30S subunit. Its function is as follows. With S5 and S12 plays an important role in translational accuracy. This Thermoplasma volcanium (strain ATCC 51530 / DSM 4299 / JCM 9571 / NBRC 15438 / GSS1) protein is Small ribosomal subunit protein uS4.